We begin with the raw amino-acid sequence, 293 residues long: Pyridoxal 5'-phosphate synthase subunit PdxS (293 aa).

D-ribose 5-phosphate is bound at residue Asp-23. The active-site Schiff-base intermediate with D-ribose 5-phosphate is the Lys-80. Gly-152 contributes to the D-ribose 5-phosphate binding site. Arg-164 is a D-glyceraldehyde 3-phosphate binding site. D-ribose 5-phosphate is bound by residues Gly-213 and 234 to 235 (GS).

This sequence belongs to the PdxS/SNZ family. As to quaternary structure, in the presence of PdxT, forms a dodecamer of heterodimers.

It carries out the reaction aldehydo-D-ribose 5-phosphate + D-glyceraldehyde 3-phosphate + L-glutamine = pyridoxal 5'-phosphate + L-glutamate + phosphate + 3 H2O + H(+). The protein operates within cofactor biosynthesis; pyridoxal 5'-phosphate biosynthesis. Functionally, catalyzes the formation of pyridoxal 5'-phosphate from ribose 5-phosphate (RBP), glyceraldehyde 3-phosphate (G3P) and ammonia. The ammonia is provided by the PdxT subunit. Can also use ribulose 5-phosphate and dihydroxyacetone phosphate as substrates, resulting from enzyme-catalyzed isomerization of RBP and G3P, respectively. The polypeptide is Pyridoxal 5'-phosphate synthase subunit PdxS (Chloroflexus aggregans (strain MD-66 / DSM 9485)).